The following is a 64-amino-acid chain: MIVVQVKDNEPIERALKRFKKKIDRVKVLKEVKSRRYYTKPSIKRREEKLKAIYKQHLQQQANG.

Belongs to the bacterial ribosomal protein bS21 family.

In Amoebophilus asiaticus (strain 5a2), this protein is Small ribosomal subunit protein bS21.